Here is a 566-residue protein sequence, read N- to C-terminus: Bifunctional NADP phosphatase/NAD kinase (566 aa).

The tract at residues 1–283 (MDMLEMALNI…KLVGIFGNRW (283 aa)) is NADP phosphatase. Mg(2+) is bound by residues glutamate 66, aspartate 85, valine 87, aspartate 88, and aspartate 229. Residues 275 to 566 (LVGIFGNRWR…YNKLKKLSLM (292 aa)) form an NAD kinase region. The active-site Proton acceptor is aspartate 355. NAD(+)-binding positions include 355-356 (DG), arginine 360, 430-431 (NE), lysine 441, arginine 458, aspartate 460, 471-476 (TAYSLS), and asparagine 528.

This sequence in the N-terminal section; belongs to the inositol monophosphatase superfamily. The protein in the C-terminal section; belongs to the NAD kinase family. In terms of assembly, homotetramer. Requires Mg(2+) as cofactor.

The protein localises to the cytoplasm. The enzyme catalyses NAD(+) + ATP = ADP + NADP(+) + H(+). It catalyses the reaction NADP(+) + H2O = phosphate + NAD(+). Its function is as follows. Involved in the regulation of the intracellular balance between NAD(H) and NADP(H), and is a key enzyme in the biosynthesis of NADP. Catalyzes the phosphorylation and dephosphorylation of NAD and NADP, respectively. Although it shows conflicting dual activities and is able to supply NADP, it seems that its physiological role is to prevent excess accumulation of NADP. In Methanococcus maripaludis (strain DSM 14266 / JCM 13030 / NBRC 101832 / S2 / LL), this protein is Bifunctional NADP phosphatase/NAD kinase.